Reading from the N-terminus, the 172-residue chain is Nascent polypeptide-associated complex subunit beta (172 aa).

Disordered stretches follow at residues Lys36 to Lys58 and Gln142 to Glu172. The segment covering Thr41–Pro50 has biased composition (basic residues). The region spanning Gly54–Val119 is the NAC-A/B domain.

This sequence belongs to the NAC-beta family. As to quaternary structure, part of the nascent polypeptide-associated complex (NAC), consisting of EGD2 and EGD1. NAC associates with ribosomes via EGD1.

It localises to the cytoplasm. The protein localises to the nucleus. In terms of biological role, component of the nascent polypeptide-associated complex (NAC), a dynamic component of the ribosomal exit tunnel, protecting the emerging polypeptides from interaction with other cytoplasmic proteins to ensure appropriate nascent protein targeting. The NAC complex also promotes mitochondrial protein import by enhancing productive ribosome interactions with the outer mitochondrial membrane and blocks the inappropriate interaction of ribosomes translating non-secretory nascent polypeptides with translocation sites in the membrane of the endoplasmic reticulum. EGD1 may act as a transcription factor that exert a negative effect on the expression of several genes that are transcribed by RNA polymerase II. The sequence is that of Nascent polypeptide-associated complex subunit beta (EGD1) from Pyricularia oryzae (strain 70-15 / ATCC MYA-4617 / FGSC 8958) (Rice blast fungus).